The primary structure comprises 360 residues: Type 2 DNA topoisomerase 6 subunit A (360 aa).

Residues 3–140 (EIERRCLRAL…FHIRPEEDGA (138 aa)) enclose the Topo IIA-type catalytic domain. Residue Tyr97 is the O-(5'-phospho-DNA)-tyrosine intermediate of the active site. The Mg(2+) site is built by Glu193 and Asp245.

This sequence belongs to the TOP6A family. Homodimer. Heterotetramer of two Top6A and two Top6B chains. Mg(2+) is required as a cofactor.

It carries out the reaction ATP-dependent breakage, passage and rejoining of double-stranded DNA.. Functionally, relaxes both positive and negative superturns and exhibits a strong decatenase activity. The polypeptide is Type 2 DNA topoisomerase 6 subunit A (Archaeoglobus fulgidus (strain ATCC 49558 / DSM 4304 / JCM 9628 / NBRC 100126 / VC-16)).